A 409-amino-acid chain; its full sequence is F-box protein At3g17320 (409 aa).

The F-box domain maps to 1 to 47 (MTKISDLPRDLAEEVLSRVPVTYLRAIRFTCKKWNTLTKRRSFTKKL).

This Arabidopsis thaliana (Mouse-ear cress) protein is F-box protein At3g17320.